The chain runs to 287 residues: ATP synthase gamma chain (287 aa).

It belongs to the ATPase gamma chain family. As to quaternary structure, F-type ATPases have 2 components, CF(1) - the catalytic core - and CF(0) - the membrane proton channel. CF(1) has five subunits: alpha(3), beta(3), gamma(1), delta(1), epsilon(1). CF(0) has three main subunits: a, b and c.

The protein localises to the cell inner membrane. Functionally, produces ATP from ADP in the presence of a proton gradient across the membrane. The gamma chain is believed to be important in regulating ATPase activity and the flow of protons through the CF(0) complex. The polypeptide is ATP synthase gamma chain (Yersinia pestis).